A 155-amino-acid polypeptide reads, in one-letter code: MLLAGGEAREIVVDGSGMIMGRLASVVAKLLLAGWRVNVVNAEKIVLSGDPRMVVESYRTTVLGVKSHFSHKWRPKRPRTPQRLFKHAVRGMLPKNKARGRRALARLRVYVGVPDELKGREFVRFPEADASRLSSHYIELGAVARQLGWKGGVEK.

It belongs to the universal ribosomal protein uL13 family. As to quaternary structure, part of the 50S ribosomal subunit.

This protein is one of the early assembly proteins of the 50S ribosomal subunit, although it is not seen to bind rRNA by itself. It is important during the early stages of 50S assembly. The sequence is that of Large ribosomal subunit protein uL13 from Aeropyrum pernix (strain ATCC 700893 / DSM 11879 / JCM 9820 / NBRC 100138 / K1).